Here is a 113-residue protein sequence, read N- to C-terminus: MEIEKNYRMNSLFEFYGPLLTDKQHAYLALYYGDDYSLGEIATEFNVSRQAVYDNIRRTEASLEEYEKKLHLFANYQAQNEAVDTLVSYARTHYPDDKALSTLLERVADQTAK.

The protein belongs to the UPF0122 family.

Functionally, might take part in the signal recognition particle (SRP) pathway. This is inferred from the conservation of its genetic proximity to ftsY/ffh. May be a regulatory protein. The protein is UPF0122 protein LSEI_1603 of Lacticaseibacillus paracasei (strain ATCC 334 / BCRC 17002 / CCUG 31169 / CIP 107868 / KCTC 3260 / NRRL B-441) (Lactobacillus paracasei).